A 670-amino-acid chain; its full sequence is MAGQFCLPVSPRLSPLKPLKPHFGDIQVGIYVAIQRSDKRMHLAVVTEINRENSWVTVEWVEKAVKKGKKIDLETILLLNPSLDSAEDPMPVSPLAPAPSSAIGDQSTTTKRVVMIPQKNKTASGDSLDVRVPSKPCLMKQKKSPCLQEIEKVQKQREKRRRLQQEIRARRALDVNTRNPNYEIMHMIEEYRRHLDSSKISVLEPRQEHRICVCVRKRPLNQRETTLKDLDIITVPSDNVVMVHESKQKVDLTRYLENQTFCFDHAFDDKASNELVYQFTAQPLVESIFRKGMATCFAYGQTGSGKTYTMGGDFAGRAQDHSKGIYALVAQDVFLLLRNSIYEKLDLKVYGTFFEIYGGKVYDLLNWKKKLQVLEDGNQQIQVVGLQEQEVCCVEEVLNLVELGNSCRTSRQTSVNAHSSRSHAVFQIILKSGGKLHGKFSLVDLAGNERGADTTKASRKRQLEGAEINKSLLALKECILALGQNKPHTPFRASKLTQVLRDSFIGRNSSTCMIATISPGMTSCENTLNTLRYANRVKELNADGRPYHRGLYPNGHEASRMLKSHIGNSEMSLQRDEFIKIPCVQSEEQQKEIEDVERATLLGKDTTTSRKGSSQWLENIQERTGGVNHDVDFCIAQSLSILEQKIGVLTEIQKKLKLLRADLHVKSKVE.

Residue Thr122 is modified to Phosphothreonine; by PLK1. Residues 146 to 173 (CLQEIEKVQKQREKRRRLQQEIRARRAL) adopt a coiled-coil conformation. Ser201 bears the Phosphoserine; by PLK1 mark. The region spanning 210 to 540 (RICVCVRKRP…LRYANRVKEL (331 aa)) is the Kinesin motor domain. ATP is bound at residue 300–307 (GQTGSGKT).

This sequence belongs to the TRAFAC class myosin-kinesin ATPase superfamily. Kinesin family. MCAK/KIF2 subfamily. In terms of processing, phosphorylation at Thr-122 by PLK1 is required for activity in the correction of kinetochore-microtubules attachment errors, while phosphorylation at Ser-201 also by PLK1 is required for the kinetochore localization and activity in prometaphase.

It is found in the cytoplasm. The protein resides in the cytoskeleton. It localises to the microtubule organizing center. The protein localises to the centrosome. Its subcellular location is the spindle. It is found in the chromosome. The protein resides in the centromere. It localises to the kinetochore. Its function is as follows. Plus end-directed microtubule-dependent motor required for spindle assembly and chromosome movement during mitosis. Has microtubule depolymerization activity. Plays a role in chromosome congression. The sequence is that of Kinesin-like protein KIF2B (KIF2B) from Macaca fascicularis (Crab-eating macaque).